Reading from the N-terminus, the 465-residue chain is Plasma alpha-L-fucosidase (465 aa).

The signal sequence occupies residues Met1 to Ala26. 2 N-linked (GlcNAc...) asparagine glycosylation sites follow: Asn169 and Asn237. Residue Ser299 is modified to Phosphoserine. Asn375 is a glycosylation site (N-linked (GlcNAc...) asparagine).

This sequence belongs to the glycosyl hydrolase 29 family. As to quaternary structure, homotetramer.

Its subcellular location is the secreted. The enzyme catalyses an alpha-L-fucoside + H2O = L-fucose + an alcohol. In terms of biological role, alpha-L-fucosidase is responsible for hydrolyzing the alpha-1,6-linked fucose joined to the reducing-end N-acetylglucosamine of the carbohydrate moieties of glycoproteins. The chain is Plasma alpha-L-fucosidase (FUCA2) from Pongo abelii (Sumatran orangutan).